A 530-amino-acid chain; its full sequence is Bifunctional purine biosynthesis protein PurH (530 aa).

The 148-residue stretch at Met1 to Val148 folds into the MGS-like domain.

The protein belongs to the PurH family.

The enzyme catalyses (6R)-10-formyltetrahydrofolate + 5-amino-1-(5-phospho-beta-D-ribosyl)imidazole-4-carboxamide = 5-formamido-1-(5-phospho-D-ribosyl)imidazole-4-carboxamide + (6S)-5,6,7,8-tetrahydrofolate. It carries out the reaction IMP + H2O = 5-formamido-1-(5-phospho-D-ribosyl)imidazole-4-carboxamide. It functions in the pathway purine metabolism; IMP biosynthesis via de novo pathway; 5-formamido-1-(5-phospho-D-ribosyl)imidazole-4-carboxamide from 5-amino-1-(5-phospho-D-ribosyl)imidazole-4-carboxamide (10-formyl THF route): step 1/1. The protein operates within purine metabolism; IMP biosynthesis via de novo pathway; IMP from 5-formamido-1-(5-phospho-D-ribosyl)imidazole-4-carboxamide: step 1/1. In Vibrio cholerae serotype O1 (strain M66-2), this protein is Bifunctional purine biosynthesis protein PurH.